A 65-amino-acid polypeptide reads, in one-letter code: Muscarinic toxin-like protein 3 (65 aa).

4 disulfides stabilise this stretch: Cys-3/Cys-24, Cys-17/Cys-41, Cys-45/Cys-57, and Cys-58/Cys-63.

Homodimer; non-covalently linked. In terms of tissue distribution, expressed by the venom gland.

It is found in the secreted. In terms of biological role, antagonist of muscle and neuronal nicotinic acetylcholine receptors (nAChR) with highest affinity for neuronal alpha-7/CHRNA7 nAChRs. In Naja kaouthia (Monocled cobra), this protein is Muscarinic toxin-like protein 3.